The sequence spans 202 residues: Ribosome maturation factor RimM (202 aa).

The PRC barrel domain occupies alanine 121–tyrosine 202.

This sequence belongs to the RimM family. Binds ribosomal protein uS19.

Its subcellular location is the cytoplasm. In terms of biological role, an accessory protein needed during the final step in the assembly of 30S ribosomal subunit, possibly for assembly of the head region. Essential for efficient processing of 16S rRNA. May be needed both before and after RbfA during the maturation of 16S rRNA. It has affinity for free ribosomal 30S subunits but not for 70S ribosomes. The protein is Ribosome maturation factor RimM of Polaromonas naphthalenivorans (strain CJ2).